A 433-amino-acid chain; its full sequence is Oxaloacetate decarboxylase beta chain 2 (433 aa).

9 helical membrane-spanning segments follow: residues 13–35, 42–64, 125–147, 160–182, 214–236, 266–288, 308–327, 339–361, and 413–432; these read LMHL…WLAI, LLLL…LALT, LFYK…VGAM, LLLG…TLNY, LAPE…VPLI, ILFP…PLLG, TVQN…SVGA, TLGI…VLMA, and VAGV…YVLA.

Belongs to the GcdB/MmdB/OadB family. Heterotrimer of an alpha, a beta and a gamma subunit. Na(+) is required as a cofactor.

It is found in the cell membrane. The catalysed reaction is oxaloacetate + 2 Na(+)(in) + H(+) = pyruvate + 2 Na(+)(out) + CO2. Catalyzes the decarboxylation of oxaloacetate coupled to Na(+) translocation. This Salmonella typhimurium (strain LT2 / SGSC1412 / ATCC 700720) protein is Oxaloacetate decarboxylase beta chain 2 (oadB2).